A 370-amino-acid chain; its full sequence is Endopolygalacturonase A (370 aa).

A signal peptide spans 1-19 (MPSAKPLFCLATLAGAALA). The propeptide occupies 20-32 (APAPSRATDFNKR). The cysteines at positions 35 and 50 are disulfide-linked. PbH1 repeat units follow at residues 162 to 192 (SDNL…DISE), 193 to 214 (STYI…AINS), 215 to 235 (GENI…SIGS), 244 to 265 (VKNV…RIKT), 273 to 295 (VEDI…VIEQ), and 307 to 352 (SNGV…DITG). An intrachain disulfide couples C209 to C225. Residue H229 is part of the active site. N246 carries an N-linked (GlcNAc...) asparagine glycan. 2 cysteine pairs are disulfide-bonded: C335–C340 and C359–C368.

This sequence belongs to the glycosyl hydrolase 28 family.

It localises to the secreted. It carries out the reaction (1,4-alpha-D-galacturonosyl)n+m + H2O = (1,4-alpha-D-galacturonosyl)n + (1,4-alpha-D-galacturonosyl)m.. Its function is as follows. Involved in maceration and soft-rotting of plant tissue. Hydrolyzes the 1,4-alpha glycosidic bonds of de-esterified pectate in the smooth region of the plant cell wall. In Aspergillus awamori (Black koji mold), this protein is Endopolygalacturonase A (pgaA).